The sequence spans 303 residues: Major fimbrium anchoring subunit FimB (303 aa).

The signal sequence occupies residues M1–G22. Residue C23 is the site of N-palmitoyl cysteine attachment. A lipid anchor (S-diacylglycerol cysteine) is attached at C23.

Belongs to the bacteroidetes fimbrillin superfamily. FimB/Mfa2 family. In terms of assembly, fimB is not part of the fimbrium itself, but anchors the fimbrium in the outer membrane. Linear, head-to-tail oligomerization of fimbrial subunits mediates assembly of the fimbrium stalk, while the minor components FimC, FimD and FimE probably form the fimbrium tip. The anchoring subunit FimB limits fimbrium length and is important for solid fimbrium attachment to the outer membrane. In its absence, the major fimbriae become very long and are easily detached from the membrane.

The protein resides in the cell outer membrane. Its function is as follows. Anchoring subunit of the major fimbriae. Regulates fimbrial length. These filamentous pili are attached to the cell surface; they mediate biofilm formation, adhesion onto host cells and onto other bacteria that are part of the oral microbiome. Fimbriae of P.gingivalis are major virulence factors. The sequence is that of Major fimbrium anchoring subunit FimB from Porphyromonas gingivalis (strain ATCC 33277 / DSM 20709 / CIP 103683 / JCM 12257 / NCTC 11834 / 2561).